The primary structure comprises 424 residues: Proline--tRNA ligase (424 aa).

The protein belongs to the class-II aminoacyl-tRNA synthetase family. ProS type 2 subfamily. In terms of assembly, homodimer.

The protein localises to the cytoplasm. It catalyses the reaction tRNA(Pro) + L-proline + ATP = L-prolyl-tRNA(Pro) + AMP + diphosphate. Its function is as follows. Catalyzes the attachment of proline to tRNA(Pro) in a two-step reaction: proline is first activated by ATP to form Pro-AMP and then transferred to the acceptor end of tRNA(Pro). This Ehrlichia canis (strain Jake) protein is Proline--tRNA ligase.